A 610-amino-acid chain; its full sequence is Protein arginine N-methyltransferase 5 (610 aa).

One can recognise an SAM-dependent MTase PRMT-type domain in the interval 284-587 (LEIPLQPLCD…VDATKVWYEW (304 aa)). Residue Tyr-300 participates in S-adenosyl-L-methionine binding. Phe-303 provides a ligand contact to a protein. S-adenosyl-L-methionine is bound by residues 309–310 (KY), Glu-368, and 396–397 (DM). The a protein site is built by Glu-412 and Glu-421. Residues Glu-412 and Glu-421 each act as proton donor/acceptor in the active site. The interaction with vls stretch occupies residues 470–610 (AFDYGYVSLL…TRGTGYNMRL (141 aa)).

It belongs to the class I-like SAM-binding methyltransferase superfamily. Protein arginine N-methyltransferase family. As to quaternary structure, interacts with vls. As to expression, expressed only in ovaries.

It is found in the cytoplasm. Functionally, arginine methyltransferase that can both catalyze the formation of omega-N monomethylarginine (MMA) and symmetrical dimethylarginine (sDMA). Specifically mediates the symmetrical dimethylation of arginine residues in the small nuclear ribonucleoproteins SmD1 and SmD3. Required for arginine symmetrical dimethylation of piwi family proteins, piwi, aub and AGO3, during germline development. Required during oogenesis for pole cell formation in the pathway controlled by oskar (osk) and for abdominal segments during early embryogenesis. Involved in nanos (nos) and germ cell mRNAs localization. This chain is Protein arginine N-methyltransferase 5, found in Drosophila melanogaster (Fruit fly).